The sequence spans 559 residues: GTP diphosphokinase CRSH2, chloroplastic (559 aa).

Residues 1 to 37 constitute a chloroplast transit peptide; it reads MASAGGEVVVVDPAAAAVAPDVEHHAPAPRLTPAGSG. The HD domain maps to 87 to 187; that stretch reads SLARALIVAA…LELAIRLDAM (101 aa). EF-hand domains are found at residues 449–484 and 486–518; these read ASAG…LGAG and KDAE…VELK. Residues Asp462, Asn464, Asp466, Arg468, Glu473, Asp496, Asn498, Asp500, Ser502, and Glu507 each contribute to the Ca(2+) site.

This sequence belongs to the RelA/SpoT family. In terms of tissue distribution, expressed in shoots.

It is found in the plastid. Its subcellular location is the chloroplast. It carries out the reaction GTP + ATP = guanosine 3'-diphosphate 5'-triphosphate + AMP. With respect to regulation, activated by calcium. In terms of biological role, possesses calcium-dependent ppGpp (guanosine 3'-diphosphate 5'-diphosphate) synthetase activity in vitro and is able to functionally complement E.coli relA mutants. May be involved in a rapid plant ppGpp-mediated response to pathogens and other stresses. The polypeptide is GTP diphosphokinase CRSH2, chloroplastic (Oryza sativa subsp. japonica (Rice)).